Consider the following 312-residue polypeptide: UDP-N-acetylenolpyruvoylglucosamine reductase (312 aa).

An FAD-binding PCMH-type domain is found at 33–199 (RVGGKAEWYC…TGATLQLLPG (167 aa)). The active site involves arginine 178. Serine 229 acts as the Proton donor in catalysis. Glutamate 299 is an active-site residue.

It belongs to the MurB family. Requires FAD as cofactor.

The protein resides in the cytoplasm. The enzyme catalyses UDP-N-acetyl-alpha-D-muramate + NADP(+) = UDP-N-acetyl-3-O-(1-carboxyvinyl)-alpha-D-glucosamine + NADPH + H(+). It functions in the pathway cell wall biogenesis; peptidoglycan biosynthesis. In terms of biological role, cell wall formation. This is UDP-N-acetylenolpyruvoylglucosamine reductase from Synechococcus sp. (strain JA-3-3Ab) (Cyanobacteria bacterium Yellowstone A-Prime).